The sequence spans 252 residues: Small ribosomal subunit protein uS3 (252 aa).

Residues 39 to 111 (IRKLINNFAK…DVNLNVLEVK (73 aa)) enclose the KH type-2 domain. The tract at residues 226–252 (SQSSNNPNRRPRNFKGGNNNHVNAKKN) is disordered.

It belongs to the universal ribosomal protein uS3 family. As to quaternary structure, part of the 30S ribosomal subunit. Forms a tight complex with proteins S10 and S14.

Binds the lower part of the 30S subunit head. Binds mRNA in the 70S ribosome, positioning it for translation. The polypeptide is Small ribosomal subunit protein uS3 (Aster yellows witches'-broom phytoplasma (strain AYWB)).